Consider the following 1159-residue polypeptide: Ferroxidase HEPHL1 (1159 aa).

A signal peptide spans 1–24 (MPRKQPAGCIFLLTFLGLSGLVGT). Plastocyanin-like domains are found at residues 25–207 (VTRT…LLVC), 218–366 (TRND…VDNC), 379–561 (QRRY…LLVC), 571–719 (TQKG…VSSC), 731–907 (MIRT…LITC), and 915–1092 (KGRR…VPSN). The Extracellular segment spans residues 25–1114 (VTRTYYIGIV…KNLGPTGAKA (1090 aa)). The Cu cation site is built by H127 and H129. An N-linked (GlcNAc...) asparagine glycan is attached at N161. The cysteines at positions 181 and 207 are disulfide-linked. Residues H187 and H189 each contribute to the Cu cation site. N236 is a glycosylation site (N-linked (GlcNAc...) asparagine). C285 and C366 are oxidised to a cystine. Cu cation contacts are provided by H304, C347, and H352. N-linked (GlcNAc...) asparagine glycosylation is present at N407. C535 and C561 form a disulfide bridge. Residue N589 is glycosylated (N-linked (GlcNAc...) asparagine). The cysteines at positions 638 and 719 are disulfide-linked. Positions 657, 700, 705, and 710 each coordinate Cu cation. A glycan (N-linked (GlcNAc...) asparagine) is linked at N772. C881 and C907 are disulfide-bonded. The N-linked (GlcNAc...) asparagine glycan is linked to N935. Positions 1003, 1006, 1008, 1048, 1049, 1050, 1054, and 1059 each coordinate Cu cation. Residues 1115–1135 (ALVILFIIGLLLLITTVILSL) traverse the membrane as a helical segment. Topologically, residues 1136 to 1159 (RLCSAMKQTDYQQVQSCALPTDAL) are cytoplasmic.

Belongs to the multicopper oxidase family. Cu cation serves as cofactor.

The protein localises to the membrane. The enzyme catalyses 4 Fe(2+) + O2 + 4 H(+) = 4 Fe(3+) + 2 H2O. In terms of biological role, is a copper-binding glycoprotein with ferroxidase activity. It oxidizes Fe(2+) to Fe(3+) without releasing radical oxygen species. May be involved in the regulation of intracellular iron content. The protein is Ferroxidase HEPHL1 (HEPHL1) of Homo sapiens (Human).